The sequence spans 396 residues: Activity-regulated cytoskeleton-associated protein (396 aa).

Residues 54 to 78 (SKQVERELKGLHRSVGKLENNLDGY) are a coiled coil. The interaction with SH3GL1 or SH3GL3 stretch occupies residues 89 to 100 (KSIKACLCRCQE). The disordered stretch occupies residues 177–207 (PPAAGELPEQESVEAQQYQSWGPGEDGQPSP). Residues 195–214 (QSWGPGEDGQPSPGVDTQIF) form an interaction with DNM2 region. Serine 260 carries the post-translational modification Phosphoserine; by CaMK2. Glycyl lysine isopeptide (Lys-Gly) (interchain with G-Cter in ubiquitin) cross-links involve residues lysine 268 and lysine 269. The residue at position 278 (threonine 278) is a Phosphothreonine. Residues 356-396 (QDGLEQAAEPSGTPLPTEDETEALTPALTSESVASDRTQPE) form a disordered region. The span at 382 to 396 (ALTSESVASDRTQPE) shows a compositional bias: polar residues.

Belongs to the ARC/ARG3.1 family. As to quaternary structure, homooligomer; homooligomerizes into virion-like capsids. Interacts with SH3GL1/endophilin-2, SH3GL3/endophilin-3 and DNM2/DYN2. Interacts with CAMK2B (in the kinase inactive state); leading to target ARC to inactive synapses. Interacts with PSEN1. Interacts with GRIN2A and GRIN2B; inhibiting homooligomerization. Post-translationally, ubiquitinated by UBE3A, leading to its degradation by the proteasome, thereby promoting AMPA receptors (AMPARs) expression at synapses. Ubiquitinated by RNF216 at Lys-268 and Lys-269 limiting ARC protein levels induced by synaptic activity and thus regulating ARC-dependent forms of synaptic plasticity. Palmitoylation anchors the protein into the membrane by allowing direct insertion into the hydrophobic core of the lipid bilayer. In terms of processing, phosphorylation at Ser-260 by CaMK2 prevents homooligomerization into virion-like capsids by disrupting an interaction surface essential for high-order oligomerization. Phosphorylation by CaMK2 inhibits synaptic activity. Expressed in brain and testis. In primary visual cortex, detected in all cortical layers with the exception of layer 5: present at highest level in layers 2/3 and 4, the predominant sites of ocular dominance plasticity (at protein level). Also expressed in skin-migratory dendritic cells.

It localises to the extracellular vesicle membrane. The protein resides in the postsynaptic cell membrane. It is found in the synapse. The protein localises to the postsynaptic density. Its subcellular location is the early endosome membrane. It localises to the cell projection. The protein resides in the dendrite. It is found in the cytoplasm. The protein localises to the cytoskeleton. Its subcellular location is the cell cortex. It localises to the dendritic spine. The protein resides in the cytoplasmic vesicle. It is found in the secretory vesicle. The protein localises to the acrosome. Its subcellular location is the clathrin-coated vesicle membrane. Its function is as follows. Master regulator of synaptic plasticity that self-assembles into virion-like capsids that encapsulate RNAs and mediate intercellular RNA transfer in the nervous system. ARC protein is released from neurons in extracellular vesicles that mediate the transfer of ARC mRNA into new target cells, where ARC mRNA can undergo activity-dependent translation. ARC capsids are endocytosed and are able to transfer ARC mRNA into the cytoplasm of neurons. Acts as a key regulator of synaptic plasticity: required for protein synthesis-dependent forms of long-term potentiation (LTP) and depression (LTD) and for the formation of long-term memory. Regulates synaptic plasticity by promoting endocytosis of AMPA receptors (AMPARs) in response to synaptic activity: this endocytic pathway maintains levels of surface AMPARs in response to chronic changes in neuronal activity through synaptic scaling, thereby contributing to neuronal homeostasis. Acts as a postsynaptic mediator of activity-dependent synapse elimination in the developing cerebellum by mediating elimination of surplus climbing fiber synapses. Accumulates at weaker synapses, probably to prevent their undesired enhancement. This suggests that ARC-containing virion-like capsids may be required to eliminate synaptic material. Required to transduce experience into long-lasting changes in visual cortex plasticity and for long-term memory. Involved in postsynaptic trafficking and processing of amyloid-beta A4 (APP) via interaction with PSEN1. In addition to its role in synapses, also involved in the regulation of the immune system: specifically expressed in skin-migratory dendritic cells and regulates fast dendritic cell migration, thereby regulating T-cell activation. This Mus musculus (Mouse) protein is Activity-regulated cytoskeleton-associated protein.